Here is a 500-residue protein sequence, read N- to C-terminus: Na(+)/H(+) antiporter NhaB (500 aa).

The next 12 helical transmembrane spans lie at 34–54 (PLFFAVSPAAAGWCLVIEFIF), 62–82 (CYPLMPGGLLLVQALVLGMTT), 90–110 (LVHNFPVILLLMFMVAGIYFM), 129–149 (ALLGLLFCFLSAFLSAFLDAL), 150–170 (TVTAVIISAAVGFYSVYHRVA), 205–225 (LLMHGAVGTALGGVCTLVGEP), 241–261 (FFSKVAPVSMPVLAAGLVTCV), 311–331 (ILIVALALHVAEVGLIGLLVI), 350–370 (FKDAMPFTALLVVFFAVVAVI), 394–414 (MLFIANGLLSAISDNVFVATI), 449–469 (VATPNGQAAFLFLLTSAIAPL), and 477–497 (MVWMALPYTVVMGLLGWYAVS).

It belongs to the NhaB Na(+)/H(+) (TC 2.A.34) antiporter family.

The protein resides in the cell inner membrane. It carries out the reaction 2 Na(+)(in) + 3 H(+)(out) = 2 Na(+)(out) + 3 H(+)(in). Its function is as follows. Na(+)/H(+) antiporter that extrudes sodium in exchange for external protons. This is Na(+)/H(+) antiporter NhaB from Pseudomonas fluorescens (strain ATCC BAA-477 / NRRL B-23932 / Pf-5).